Consider the following 471-residue polypeptide: Putative multidrug resistance protein MdtD (471 aa).

Residues 1 to 11 (MTDLPDNTRWQ) lie on the Periplasmic side of the membrane. The chain crosses the membrane as a helical span at residues 12–32 (LWIVAFGFFMQSLDTTIVNTA). Residues 33 to 48 (LPSMAQSLGESPLHMH) are Cytoplasmic-facing. A helical membrane pass occupies residues 49 to 69 (MVIVSYVLTVAVMLPASGWLA). Topologically, residues 70–76 (DKVGVRN) are periplasmic. The helical transmembrane segment at 77 to 97 (IFFTAIVLFTLGSLFCALSGT) threads the bilayer. Residues 98–101 (LNEL) are Cytoplasmic-facing. A helical transmembrane segment spans residues 102–124 (LLARALQGVGGAMMVPVGRLTVM). The Periplasmic segment spans residues 125 to 137 (KIVPREQYMAAMT). Residues 138 to 158 (FVTLPGQVGPLLGPALGGLLV) traverse the membrane as a helical segment. Over 159 to 164 (EYASWH) the chain is Cytoplasmic. Residues 165 to 185 (WIFLINIPVGIIGAIATLMLM) traverse the membrane as a helical segment. Residues 186 to 196 (PNYTMQTRRFD) lie on the Periplasmic side of the membrane. A helical membrane pass occupies residues 197–217 (LSGFLLLAIGMAVLTLALDGS). At 218 to 224 (KGTGLSP) the chain is on the cytoplasmic side. Residues 225 to 245 (LAITGLVAVGVVALVLYLLHA) traverse the membrane as a helical segment. The Periplasmic segment spans residues 246-262 (RNNNRALFSLKLFRTRT). A helical transmembrane segment spans residues 263-283 (FSLGLAGSFAGRIGSGMLPFM). The Cytoplasmic portion of the chain corresponds to 284 to 285 (TP). The chain crosses the membrane as a helical span at residues 286–306 (VFLQIGLGFSPFHAGLMMIPM). Residues 307 to 341 (VLGSMGMKRIVVQVVNRFGYRRVLVATTLGLSLVT) lie on the Periplasmic side of the membrane. Residues 342-362 (LLFMTTALLGWYYVLPFVLFL) form a helical membrane-spanning segment. The Cytoplasmic portion of the chain corresponds to 363–395 (QGMVNSTRFSSMNTLTLKDLPDNLASSGNSLLS). Residues 396-416 (MIMQLSMSIGVTIAGLLLGLF) form a helical membrane-spanning segment. At 417–430 (GSQHVSVDSGTTQT) the chain is on the periplasmic side. The helical transmembrane segment at 431-451 (VFMYTWLSMAFIIALPAFIFA) threads the bilayer. Residues 452–471 (RVPNDTHQNVAISRRKRSAQ) are Cytoplasmic-facing.

The protein belongs to the major facilitator superfamily. TCR/Tet family.

The protein localises to the cell inner membrane. In Escherichia coli O17:K52:H18 (strain UMN026 / ExPEC), this protein is Putative multidrug resistance protein MdtD.